A 681-amino-acid chain; its full sequence is Heat shock 70 kDa protein (681 aa).

Residues asparagine 655–methionine 665 are compositionally biased toward gly residues. Residues asparagine 655 to aspartate 681 are disordered. Low complexity predominate over residues proline 666–proline 675.

It belongs to the heat shock protein 70 family.

This is Heat shock 70 kDa protein from Plasmodium falciparum.